A 75-amino-acid polypeptide reads, in one-letter code: Putative antitoxin VapB17 (75 aa).

In terms of biological role, putative antitoxin component of a possible type II toxin-antitoxin (TA) system. The cognate toxin is VapC17. The chain is Putative antitoxin VapB17 (vapB17) from Mycobacterium tuberculosis (strain CDC 1551 / Oshkosh).